Here is a 642-residue protein sequence, read N- to C-terminus: Pentatricopeptide repeat-containing protein At3g16010 (642 aa).

14 PPR repeats span residues 125 to 159, 161 to 195, 196 to 230, 232 to 266, 267 to 301, 302 to 336, 337 to 371, 372 to 407, 408 to 442, 443 to 473, 478 to 512, 513 to 547, 548 to 582, and 583 to 617; these read DCSTYMTLIRCLEEARLYGEMYRTIQEVVRNTYVS, SPAVLSELVKALGRAKMVSKALSVFYQAKGRKCKP, TSSTYNSVILMLMQEGQHEKVHEVYTEMCNEGDCF, DTITYSALISSYEKLGRNDSAIRLFDEMKDNCMQP, TEKIYTTLLGIYFKVGKVEKALDLFEEMKRAGCSP, TVYTYTELIKGLGKAGRVDEAYGFYKDMLRDGLTP, DVVFLNNLMNILGKVGRVEELTNVFSEMGMWRCTP, TVVSYNTVIKALFESKAHVSEVSSWFDKMKADSVSP, SEFTYSILIDGYCKTNRVEKALLLLEEMDEKGFPP, CPAAYCSLINALGKAKRYEAANELFKELKEN, SSRVYAVMIKHFGKCGKLSEAVDLFNEMKNQGSGP, DVYAYNALMSGMVKAGMINEANSLLRKMEENGCRA, DINSHNIILNGFARTGVPRRAIEMFETIKHSGIKP, and DGVTYNTLLGCFAHAGMFEEAARMMREMKDKGFEY.

Belongs to the PPR family. P subfamily.

This Arabidopsis thaliana (Mouse-ear cress) protein is Pentatricopeptide repeat-containing protein At3g16010.